The primary structure comprises 306 residues: Tyrosine recombinase EUBREC_2677 (306 aa).

The region spanning N2 to E84 is the Core-binding (CB) domain. In terms of domain architecture, Tyr recombinase spans I106 to I296. Active-site residues include R155, K179, H248, R251, and H274. Y283 (O-(3'-phospho-DNA)-tyrosine intermediate) is an active-site residue.

Belongs to the 'phage' integrase family.

It localises to the cytoplasm. Site-specific tyrosine recombinase, which acts by catalyzing the cutting and rejoining of the recombining DNA molecules. The chain is Tyrosine recombinase EUBREC_2677 from Agathobacter rectalis (strain ATCC 33656 / DSM 3377 / JCM 17463 / KCTC 5835 / VPI 0990) (Eubacterium rectale).